The chain runs to 233 residues: tRNA (guanine-N(1)-)-methyltransferase (233 aa).

S-adenosyl-L-methionine is bound by residues Gly113 and 133–138; that span reads VGDYVL.

This sequence belongs to the RNA methyltransferase TrmD family. Homodimer.

The protein localises to the cytoplasm. It carries out the reaction guanosine(37) in tRNA + S-adenosyl-L-methionine = N(1)-methylguanosine(37) in tRNA + S-adenosyl-L-homocysteine + H(+). Functionally, specifically methylates guanosine-37 in various tRNAs. This is tRNA (guanine-N(1)-)-methyltransferase from Rhizobium etli (strain ATCC 51251 / DSM 11541 / JCM 21823 / NBRC 15573 / CFN 42).